A 272-amino-acid chain; its full sequence is Indole-3-glycerol phosphate synthase (272 aa).

This sequence belongs to the TrpC family.

The catalysed reaction is 1-(2-carboxyphenylamino)-1-deoxy-D-ribulose 5-phosphate + H(+) = (1S,2R)-1-C-(indol-3-yl)glycerol 3-phosphate + CO2 + H2O. It participates in amino-acid biosynthesis; L-tryptophan biosynthesis; L-tryptophan from chorismate: step 4/5. This chain is Indole-3-glycerol phosphate synthase, found in Mycobacterium tuberculosis (strain ATCC 25177 / H37Ra).